We begin with the raw amino-acid sequence, 1044 residues long: Isoleucine--tRNA ligase (1044 aa).

The 'HIGH' region motif lies at 48–58 (PFATGLPHFGH). The short motif at 594-598 (KMSKS) is the 'KMSKS' region element. An ATP-binding site is contributed by lysine 597.

It belongs to the class-I aminoacyl-tRNA synthetase family. IleS type 2 subfamily. In terms of assembly, monomer. Zn(2+) serves as cofactor.

It localises to the cytoplasm. It catalyses the reaction tRNA(Ile) + L-isoleucine + ATP = L-isoleucyl-tRNA(Ile) + AMP + diphosphate. Functionally, catalyzes the attachment of isoleucine to tRNA(Ile). As IleRS can inadvertently accommodate and process structurally similar amino acids such as valine, to avoid such errors it has two additional distinct tRNA(Ile)-dependent editing activities. One activity is designated as 'pretransfer' editing and involves the hydrolysis of activated Val-AMP. The other activity is designated 'posttransfer' editing and involves deacylation of mischarged Val-tRNA(Ile). The polypeptide is Isoleucine--tRNA ligase (Borrelia turicatae (strain 91E135)).